The chain runs to 142 residues: NTF2-related export protein 2 (142 aa).

The NTF2 domain occupies 17–136 (AAEEFVNIYY…WKIASDCFRF (120 aa)).

Associates with NXF1, NXF2, NXF3 and NXF5.

The protein resides in the nucleus. It is found in the cytoplasm. In terms of biological role, regulator of protein export for NES-containing proteins. Also plays a role in mRNA nuclear export. The chain is NTF2-related export protein 2 (Nxt2) from Mus musculus (Mouse).